We begin with the raw amino-acid sequence, 318 residues long: MPVTVTRTTITTTSSSSTTVGSARALTQPLGLLRLLQLVSTCVAFSLVASVGAWTGPMGNWAMFTWCFCFAVTLIILIEELGGFQARFPLSWRNFPITFACYAALFCLSSSIIYPTTYVQFLPHGRSRDHAIAATTFSCVACLAYATEVAWTRARPGEITGYMATVPGLLKVFETFVACIIFAFISEPSLYQQRPALEWCVAVYAICFILAAVTVLLNLGDCTNMLPIPFPTFLSGLALLSVLLYATAIVLWPLYQFDQRYNSQPRRSMDPSCSRSYVQPNEVCNWDRRLAVSILTGINLLAYVSDLVYSTRLVFVKV.

MARVEL domains lie at 25-157 (ALTQ…ARPG) and 162-315 (YMAT…RLVF). Transmembrane regions (helical) follow at residues 35-55 (LLQL…GAWT), 58-78 (MGNW…IILI), 95-115 (FPIT…IIYP), 131-151 (AIAA…EVAW), 165-185 (TVPG…FAFI), 197-217 (LEWC…TVLL), 233-253 (FLSG…VLWP), and 290-310 (LAVS…LVYS).

Belongs to the MAL family.

The protein localises to the membrane. This chain is Myeloid-associated differentiation marker (Myadm), found in Rattus norvegicus (Rat).